Reading from the N-terminus, the 72-residue chain is Aurein-2.2 (72 aa).

An N-terminal signal peptide occupies residues 1 to 22; sequence MAFLKKSLFLVLFLGLVSLSIC. Residues 23–49 constitute a propeptide that is removed on maturation; the sequence is EKEKRQNEEDEDENEAANHEEGSEEKR. Residues 27–47 are disordered; sequence RQNEEDEDENEAANHEEGSEE. A compositionally biased stretch (basic and acidic residues) spans 38-47; that stretch reads AANHEEGSEE. Leucine amide is present on leucine 65. Positions 69 to 72 are excised as a propeptide; it reads NDLE.

In terms of processing, amidation is essential for antibacterial activity against Gram-positive bacteria. In terms of tissue distribution, expressed by the skin dorsal glands.

The protein localises to the secreted. It is found in the target cell membrane. Functionally, amphipathic alpha-helical antimicrobial peptide with weak to moderate activity against Gram-positive bacteria, and no activity against Gram-negative bacteria. Probably acts by disturbing membrane functions with its amphipathic structure. Strongly inhibits the formation of NO by neuronal nitric oxide synthase (nNOS) at micromolar concentrations. Acts by a non-competitive mechanism, probably by binding to calcium/calmodulin and as a consequence blocking calmodulin attachment to nNOS. In Ranoidea aurea (Green and golden bell frog), this protein is Aurein-2.2.